The following is a 278-amino-acid chain: Orotidine 5'-phosphate decarboxylase (278 aa).

Catalysis depends on K96, which acts as the Proton donor.

Belongs to the OMP decarboxylase family. Type 2 subfamily.

The enzyme catalyses orotidine 5'-phosphate + H(+) = UMP + CO2. The protein operates within pyrimidine metabolism; UMP biosynthesis via de novo pathway; UMP from orotate: step 2/2. The chain is Orotidine 5'-phosphate decarboxylase from Salinispora tropica (strain ATCC BAA-916 / DSM 44818 / JCM 13857 / NBRC 105044 / CNB-440).